A 571-amino-acid chain; its full sequence is Proline--tRNA ligase 1 (571 aa).

The protein belongs to the class-II aminoacyl-tRNA synthetase family. ProS type 1 subfamily. Homodimer.

Its subcellular location is the cytoplasm. It carries out the reaction tRNA(Pro) + L-proline + ATP = L-prolyl-tRNA(Pro) + AMP + diphosphate. Catalyzes the attachment of proline to tRNA(Pro) in a two-step reaction: proline is first activated by ATP to form Pro-AMP and then transferred to the acceptor end of tRNA(Pro). As ProRS can inadvertently accommodate and process non-cognate amino acids such as alanine and cysteine, to avoid such errors it has two additional distinct editing activities against alanine. One activity is designated as 'pretransfer' editing and involves the tRNA(Pro)-independent hydrolysis of activated Ala-AMP. The other activity is designated 'posttransfer' editing and involves deacylation of mischarged Ala-tRNA(Pro). The misacylated Cys-tRNA(Pro) is not edited by ProRS. The chain is Proline--tRNA ligase 1 from Clostridioides difficile (strain 630) (Peptoclostridium difficile).